The primary structure comprises 940 residues: Serine/threonine-protein kinase PLK4 (940 aa).

One can recognise a Protein kinase domain in the interval Phe-12–Met-265. ATP contacts are provided by residues Leu-18 to Val-26 and Lys-41. Catalysis depends on Asp-136, which acts as the Proton acceptor. Disordered stretches follow at residues His-262–Arg-353 and Arg-409–Val-529. A compositionally biased stretch (low complexity) spans Ser-273–Arg-305. 3 stretches are compositionally biased toward polar residues: residues Phe-337–Asp-349, Asn-440–Phe-465, and Gly-494–Asn-519. Residues Cys-563–Lys-676 form the Cryptic POLO box 1 (CPB1) domain. One can recognise a Cryptic POLO box 2 (CPB2) domain in the interval Thr-677–Pro-791. In terms of domain architecture, POLO box spans Lys-857–Asn-935.

It belongs to the protein kinase superfamily. Ser/Thr protein kinase family. CDC5/Polo subfamily. In terms of assembly, homodimer. Post-translationally, ubiquitinated; leading to its degradation by the proteasome.

It localises to the cytoplasm. The protein resides in the cytoskeleton. It is found in the microtubule organizing center. Its subcellular location is the centrosome. The protein localises to the centriole. The enzyme catalyses L-seryl-[protein] + ATP = O-phospho-L-seryl-[protein] + ADP + H(+). It carries out the reaction L-threonyl-[protein] + ATP = O-phospho-L-threonyl-[protein] + ADP + H(+). Serine/threonine-protein kinase that plays a central role in centriole duplication. Able to trigger procentriole formation on the surface of the parental centriole cylinder, leading to the recruitment of centriole biogenesis proteins such as sass6, cpap, ccp110, cep135 and gamma-tubulin. When overexpressed, it is able to induce centrosome amplification through the simultaneous generation of multiple procentrioles adjoining each parental centriole during S phase. Its central role in centriole replication suggests a possible role in tumorigenesis, centrosome aberrations being frequently observed in tumors. Also involved in deuterosome-mediated centriole amplification in multiciliated that can generate more than 100 centrioles. This chain is Serine/threonine-protein kinase PLK4, found in Danio rerio (Zebrafish).